The following is a 410-amino-acid chain: Putative competence-damage inducible protein (410 aa).

It belongs to the CinA family.

The polypeptide is Putative competence-damage inducible protein (Clostridium beijerinckii (strain ATCC 51743 / NCIMB 8052) (Clostridium acetobutylicum)).